The sequence spans 488 residues: NADH-ubiquinone oxidoreductase chain 2 (488 aa).

14 helical membrane passes run 4–24, 45–65, 84–104, 111–131, 134–154, 168–188, 215–235, 252–272, 282–302, 308–328, 334–354, 375–395, 400–420, and 456–476; these read LFLA…LLIH, WLGL…APLL, FCQI…FDFF, AFEF…MISA, LIAM…LAAS, YLIL…MIYG, IFMG…AVPF, AFLS…VFIY, IFFF…MAQT, LAYS…CGTI, LLIG…IVLA, ILAI…PLAG, FYLF…VGVV, and LLLA…SPLF.

Belongs to the complex I subunit 2 family.

It localises to the mitochondrion inner membrane. The enzyme catalyses a ubiquinone + NADH + 5 H(+)(in) = a ubiquinol + NAD(+) + 4 H(+)(out). Core subunit of the mitochondrial membrane respiratory chain NADH dehydrogenase (Complex I) that is believed to belong to the minimal assembly required for catalysis. Complex I functions in the transfer of electrons from NADH to the respiratory chain. The immediate electron acceptor for the enzyme is believed to be ubiquinone. This chain is NADH-ubiquinone oxidoreductase chain 2 (ND2), found in Oenothera berteroana (Bertero's evening primrose).